Here is a 408-residue protein sequence, read N- to C-terminus: Imidazolonepropionase (408 aa).

Fe(3+)-binding residues include His-73 and His-75. Zn(2+) contacts are provided by His-73 and His-75. 4-imidazolone-5-propanoate contacts are provided by Arg-82, Tyr-145, and His-178. Residue Tyr-145 coordinates N-formimidoyl-L-glutamate. A Fe(3+)-binding site is contributed by His-243. Residue His-243 coordinates Zn(2+). 4-imidazolone-5-propanoate is bound at residue Gln-246. Fe(3+) is bound at residue Asp-318. Asp-318 is a Zn(2+) binding site. Residues Asn-320 and Gly-322 each coordinate N-formimidoyl-L-glutamate. Ser-323 lines the 4-imidazolone-5-propanoate pocket.

It belongs to the metallo-dependent hydrolases superfamily. HutI family. Requires Zn(2+) as cofactor. Fe(3+) is required as a cofactor.

It is found in the cytoplasm. The enzyme catalyses 4-imidazolone-5-propanoate + H2O = N-formimidoyl-L-glutamate. Its pathway is amino-acid degradation; L-histidine degradation into L-glutamate; N-formimidoyl-L-glutamate from L-histidine: step 3/3. Its function is as follows. Catalyzes the hydrolytic cleavage of the carbon-nitrogen bond in imidazolone-5-propanoate to yield N-formimidoyl-L-glutamate. It is the third step in the universal histidine degradation pathway. The protein is Imidazolonepropionase of Shewanella woodyi (strain ATCC 51908 / MS32).